We begin with the raw amino-acid sequence, 429 residues long: Glutamate-1-semialdehyde 2,1-aminomutase (429 aa).

Lysine 267 carries the post-translational modification N6-(pyridoxal phosphate)lysine.

It belongs to the class-III pyridoxal-phosphate-dependent aminotransferase family. HemL subfamily. In terms of assembly, homodimer. Pyridoxal 5'-phosphate serves as cofactor.

The protein localises to the cytoplasm. It carries out the reaction (S)-4-amino-5-oxopentanoate = 5-aminolevulinate. The protein operates within porphyrin-containing compound metabolism; protoporphyrin-IX biosynthesis; 5-aminolevulinate from L-glutamyl-tRNA(Glu): step 2/2. This is Glutamate-1-semialdehyde 2,1-aminomutase from Stenotrophomonas maltophilia (strain R551-3).